Here is a 147-residue protein sequence, read N- to C-terminus: Small ribosomal subunit protein uS12 (147 aa).

It belongs to the universal ribosomal protein uS12 family. In terms of assembly, part of the 30S ribosomal subunit.

Functionally, with S4 and S5 plays an important role in translational accuracy. Located at the interface of the 30S and 50S subunits. This Methanococcus maripaludis (strain C7 / ATCC BAA-1331) protein is Small ribosomal subunit protein uS12.